A 105-amino-acid polypeptide reads, in one-letter code: Small ribosomal subunit protein eS10B (105 aa).

The protein belongs to the eukaryotic ribosomal protein eS10 family. In terms of assembly, component of the small ribosomal subunit (SSU). Mature yeast ribosomes consist of a small (40S) and a large (60S) subunit. The 40S small subunit contains 1 molecule of ribosomal RNA (18S rRNA) and 33 different proteins (encoded by 57 genes). The large 60S subunit contains 3 rRNA molecules (25S, 5.8S and 5S rRNA) and 46 different proteins (encoded by 81 genes). eS10 interacts with GCN1 (via middle region); this interaction is direct and promotes GCN2 kinase activity. In terms of processing, the N-terminus is not modified.

The protein localises to the cytoplasm. In terms of biological role, component of the ribosome, a large ribonucleoprotein complex responsible for the synthesis of proteins in the cell. The small ribosomal subunit (SSU) binds messenger RNAs (mRNAs) and translates the encoded message by selecting cognate aminoacyl-transfer RNA (tRNA) molecules. The large subunit (LSU) contains the ribosomal catalytic site termed the peptidyl transferase center (PTC), which catalyzes the formation of peptide bonds, thereby polymerizing the amino acids delivered by tRNAs into a polypeptide chain. The nascent polypeptides leave the ribosome through a tunnel in the LSU and interact with protein factors that function in enzymatic processing, targeting, and the membrane insertion of nascent chains at the exit of the ribosomal tunnel. eS10 plays a role as a positive regulator of the GCN2 kinase activity by stimulating GCN1-mediated GCN2 activation. The protein is Small ribosomal subunit protein eS10B of Saccharomyces cerevisiae (strain ATCC 204508 / S288c) (Baker's yeast).